The sequence spans 223 residues: Adenylate kinase (223 aa).

ATP is bound at residue 10 to 15 (GSGKGT). The tract at residues 30-59 (ESGAIFRQHIGGGTELGKKAKEYIDRGDLV) is NMP. AMP-binding positions include Ser-31, Arg-36, 57 to 59 (DLV), 84 to 87 (GFPR), and Gln-91. The segment at 125–164 (GRRLCKNDNNHPNNIFIDAIKPDGDVCRVCGGSLSARADD) is LID. An ATP-binding site is contributed by Arg-126. Positions 161 and 173 each coordinate AMP. Residue Gly-209 coordinates ATP.

It belongs to the adenylate kinase family. In terms of assembly, monomer.

It localises to the cytoplasm. The catalysed reaction is AMP + ATP = 2 ADP. The protein operates within purine metabolism; AMP biosynthesis via salvage pathway; AMP from ADP: step 1/1. Functionally, catalyzes the reversible transfer of the terminal phosphate group between ATP and AMP. Plays an important role in cellular energy homeostasis and in adenine nucleotide metabolism. In Nitratidesulfovibrio vulgaris (strain DSM 19637 / Miyazaki F) (Desulfovibrio vulgaris), this protein is Adenylate kinase.